The sequence spans 397 residues: Gastric triacylglycerol lipase (397 aa).

A signal peptide spans 1–19 (MWWLLVTVCFIHMSGNAFC). N-linked (GlcNAc...) asparagine glycosylation is present at asparagine 33. The AB hydrolase-1 domain maps to 77–376 (PVVFLQHGLL…PNYNHLDFIW (300 aa)). The active-site Nucleophile is the serine 171. A disulfide bridge connects residues cysteine 245 and cysteine 254. 2 N-linked (GlcNAc...) asparagine glycosylation sites follow: asparagine 270 and asparagine 326. Active-site charge relay system residues include aspartate 342 and histidine 371.

This sequence belongs to the AB hydrolase superfamily. Lipase family.

It localises to the secreted. It carries out the reaction a triacylglycerol + H2O = a diacylglycerol + a fatty acid + H(+). The enzyme catalyses 1,2,3-tri-(9Z-octadecenoyl)-glycerol + H2O = 1,2-di-(9Z-octadecenoyl)-sn-glycerol + (9Z)-octadecenoate + H(+). The catalysed reaction is 1,2,3-trioctanoylglycerol + H2O = 1,2-dioctanoyl-sn-glycerol + octanoate + H(+). Its activity is regulated as follows. Inhibited by diethylp-nitrophenyl phosphate but not inhibited by thiol reagents 5,5'-dithiobis(2-nitrobenzoic acid) or 4,4'-dithiopyridine. Catalyzes the hydrolysis of triacylglycerols to yield free fatty acids, diacylglycerol, monoacylglycerol, and glycerol. Shows a preferential hydrolysis at the sn-3 position of triacylglycerol. This Bos taurus (Bovine) protein is Gastric triacylglycerol lipase (LIPF).